Reading from the N-terminus, the 262-residue chain is Putative hydro-lyase RHA1_ro03475 (262 aa).

Belongs to the D-glutamate cyclase family.

The protein is Putative hydro-lyase RHA1_ro03475 of Rhodococcus jostii (strain RHA1).